The following is a 1363-amino-acid chain: Insulin-like peptide receptor (1363 aa).

The N-terminal stretch at 1 to 29 (MRVVDKMAGLMWAALTLVIGLGLLVPSNG) is a signal peptide. 16 N-linked (GlcNAc...) asparagine glycosylation sites follow: Asn51, Asn97, Asn137, Asn278, Asn483, Asn599, Asn617, Asn665, Asn666, Asn711, Asn732, Asn736, Asn743, Asn816, Asn885, and Asn898. Fibronectin type-III domains lie at 473–586 (SFSR…TDAD) and 590–680 (HPQD…CPKS). Fibronectin type-III domains follow at residues 712–804 (ETRA…LART) and 813–912 (IPGN…VEEE). Over 721–928 (ELPVTARPFY…QDPQQQVPVS (208 aa)) the chain is Extracellular. Positions 739 to 759 (LPSTNRTVPPTPTPNPNPQLE) are disordered. The chain crosses the membrane as a helical span at residues 929-949 (LMIGMGVGFSLLLILAVIFGI). Over 950–1363 (WYCTKKRFGD…NLRIPKSTLC (414 aa)) the chain is Cytoplasmic. The Protein kinase domain occupies 994 to 1283 (ITLIRELGQG…EIVEILSPEL (290 aa)). ATP contacts are provided by residues 1000-1008 (LGQGSFGMV) and Lys1028. A disordered region spans residues 1091-1117 (PEEDVGLSDSPASNEAKNSPFAENDND). Asp1148 (proton acceptor) is an active-site residue. A Phosphotyrosine; by autocatalysis modification is found at Tyr1174. The disordered stretch occupies residues 1316–1363 (DTETEMYPSGSEFSSTPSPPSETPYSHMNGSHPQNGSMNLRIPKSTLC). A compositionally biased stretch (low complexity) spans 1322–1331 (YPSGSEFSST). The segment covering 1343-1353 (MNGSHPQNGSM) has biased composition (polar residues).

Belongs to the protein kinase superfamily. Tyr protein kinase family. Insulin receptor subfamily. In terms of assembly, probable tetramer of 2 alpha and 2 beta chains linked by disulfide bonds. The alpha chains contribute to the formation of the ligand-binding domain, while the beta chains carry the kinase domain. It depends on Mn(2+) as a cofactor.

It is found in the membrane. The catalysed reaction is L-tyrosyl-[protein] + ATP = O-phospho-L-tyrosyl-[protein] + ADP + H(+). Functionally, this receptor binds to the insulin related peptide and has a tyrosine-protein kinase activity. This Branchiostoma lanceolatum (Common lancelet) protein is Insulin-like peptide receptor.